The chain runs to 614 residues: Sodium- and chloride-dependent betaine transporter (614 aa).

At 1-44 (MDGKVAVQECGPPAVSWVPEEGEKLDQEDEDQVKDRGQWTNKME) the chain is on the cytoplasmic side. The next 3 membrane-spanning stretches (helical) occupy residues 45-65 (FVLS…FPYL), 73-92 (AFFI…VFFL), and 117-137 (GIGL…IIIL). Over 138–210 (AWALFYLFSS…SGIHDLGSLR (73 aa)) the chain is Extracellular. The cysteines at positions 157 and 166 are disulfide-linked. Asparagine 171 and asparagine 183 each carry an N-linked (GlcNAc...) asparagine glycan. 9 consecutive transmembrane segments (helical) span residues 211 to 229 (WELA…FCIW), 238 to 255 (VVYF…ILLI), 291 to 308 (IFFS…LGSY), 320 to 341 (IALC…FSIL), 374 to 393 (MPLS…FLGL), 423 to 441 (LLIL…FLVT), 458 to 478 (GICL…VYGA), 499 to 518 (ISWL…FSLS), and 538 to 556 (IGWF…FVVI). Topologically, residues 557–614 (TLLKTRGPFRKRLRQLITPDSSLPQPKQHPCLDGSAGRNFGPSPTREGLIAGEKETHL) are cytoplasmic. The disordered stretch occupies residues 576-614 (DSSLPQPKQHPCLDGSAGRNFGPSPTREGLIAGEKETHL).

Belongs to the sodium:neurotransmitter symporter (SNF) (TC 2.A.22) family. SLC6A12 subfamily. In terms of assembly, interacts with LIN7C. In terms of tissue distribution, expressed in kidney, liver, heart, skeletal muscle, placenta, and a widespread distribution in the brain.

The protein resides in the basolateral cell membrane. The protein localises to the cell membrane. It carries out the reaction 4-aminobutanoate(out) + chloride(out) + 3 Na(+)(out) = 4-aminobutanoate(in) + chloride(in) + 3 Na(+)(in). The catalysed reaction is glycine betaine(out) + 2 chloride(out) + 3 Na(+)(out) = glycine betaine(in) + 2 chloride(in) + 3 Na(+)(in). Functionally, transporter that mediates cellular uptake of betaine and GABA in a sodium- and chloride-dependent process. May have a role in regulation of GABAergic transmission in the brain through the reuptake of GABA into presynaptic terminals, as well as in osmotic regulation. Probably also involved in renal and hepatic osmotic regulation. The sequence is that of Sodium- and chloride-dependent betaine transporter from Homo sapiens (Human).